The sequence spans 140 residues: MSIPQELYYTKDHEWLRKEGDEVVIGITRFAADQLGDVVFVELPQVEDTLQMGGTFGVVESVKAASDLFSPITGQVIATNPDLAEAPELVNEDPYGKGWMLRLKPEDPAQMDALLTAQAYTAWLETCSSFAVRFGQNLTL.

One can recognise a Lipoyl-binding domain in the interval 22-104 (EVVIGITRFA…YGKGWMLRLK (83 aa)). Lys-63 carries the N6-lipoyllysine modification.

The protein belongs to the GcvH family. The glycine cleavage system is composed of four proteins: P, T, L and H. (R)-lipoate serves as cofactor.

In terms of biological role, the glycine cleavage system catalyzes the degradation of glycine. The H protein shuttles the methylamine group of glycine from the P protein to the T protein. This chain is Glycine cleavage system H protein, found in Magnetococcus marinus (strain ATCC BAA-1437 / JCM 17883 / MC-1).